The following is a 223-amino-acid chain: Deoxyribose-phosphate aldolase (223 aa).

The active-site Proton donor/acceptor is Asp91. Lys153 serves as the catalytic Schiff-base intermediate with acetaldehyde. Lys182 serves as the catalytic Proton donor/acceptor.

This sequence belongs to the DeoC/FbaB aldolase family. DeoC type 1 subfamily.

The protein resides in the cytoplasm. It catalyses the reaction 2-deoxy-D-ribose 5-phosphate = D-glyceraldehyde 3-phosphate + acetaldehyde. Its pathway is carbohydrate degradation; 2-deoxy-D-ribose 1-phosphate degradation; D-glyceraldehyde 3-phosphate and acetaldehyde from 2-deoxy-alpha-D-ribose 1-phosphate: step 2/2. Its function is as follows. Catalyzes a reversible aldol reaction between acetaldehyde and D-glyceraldehyde 3-phosphate to generate 2-deoxy-D-ribose 5-phosphate. The sequence is that of Deoxyribose-phosphate aldolase from Streptococcus pyogenes serotype M12 (strain MGAS2096).